The primary structure comprises 542 residues: CTP synthase (542 aa).

The segment at 1–265 (MARYVFITGG…DSEVLSAFGI (265 aa)) is amidoligase domain. Serine 13 is a binding site for CTP. Serine 13 provides a ligand contact to UTP. 14-19 (SLGKGI) provides a ligand contact to ATP. Tyrosine 54 is a binding site for L-glutamine. Aspartate 71 is a binding site for ATP. Residues aspartate 71 and glutamate 139 each contribute to the Mg(2+) site. Residues 146-148 (DIE), 186-191 (KTKPTQ), and lysine 222 each bind CTP. Residues 186–191 (KTKPTQ) and lysine 222 each bind UTP. A Glutamine amidotransferase type-1 domain is found at 291 to 541 (TIAIVGKYTG…IEAAIEQSRL (251 aa)). Residue glycine 353 coordinates L-glutamine. The Nucleophile; for glutamine hydrolysis role is filled by cysteine 380. L-glutamine contacts are provided by residues 381-384 (FGMQ), glutamate 404, and arginine 469. Catalysis depends on residues histidine 514 and glutamate 516.

This sequence belongs to the CTP synthase family. Homotetramer.

The enzyme catalyses UTP + L-glutamine + ATP + H2O = CTP + L-glutamate + ADP + phosphate + 2 H(+). It catalyses the reaction L-glutamine + H2O = L-glutamate + NH4(+). It carries out the reaction UTP + NH4(+) + ATP = CTP + ADP + phosphate + 2 H(+). It participates in pyrimidine metabolism; CTP biosynthesis via de novo pathway; CTP from UDP: step 2/2. Its activity is regulated as follows. Allosterically activated by GTP, when glutamine is the substrate; GTP has no effect on the reaction when ammonia is the substrate. The allosteric effector GTP functions by stabilizing the protein conformation that binds the tetrahedral intermediate(s) formed during glutamine hydrolysis. Inhibited by the product CTP, via allosteric rather than competitive inhibition. Catalyzes the ATP-dependent amination of UTP to CTP with either L-glutamine or ammonia as the source of nitrogen. Regulates intracellular CTP levels through interactions with the four ribonucleotide triphosphates. The polypeptide is CTP synthase (Brucella anthropi (strain ATCC 49188 / DSM 6882 / CCUG 24695 / JCM 21032 / LMG 3331 / NBRC 15819 / NCTC 12168 / Alc 37) (Ochrobactrum anthropi)).